Reading from the N-terminus, the 888-residue chain is Alanine--tRNA ligase (888 aa).

Zn(2+)-binding residues include H573, H577, C676, and H680.

It belongs to the class-II aminoacyl-tRNA synthetase family. Zn(2+) serves as cofactor.

It localises to the cytoplasm. It carries out the reaction tRNA(Ala) + L-alanine + ATP = L-alanyl-tRNA(Ala) + AMP + diphosphate. Its function is as follows. Catalyzes the attachment of alanine to tRNA(Ala) in a two-step reaction: alanine is first activated by ATP to form Ala-AMP and then transferred to the acceptor end of tRNA(Ala). Also edits incorrectly charged Ser-tRNA(Ala) and Gly-tRNA(Ala) via its editing domain. This Corynebacterium diphtheriae (strain ATCC 700971 / NCTC 13129 / Biotype gravis) protein is Alanine--tRNA ligase.